A 1273-amino-acid chain; its full sequence is Inverted formin-2 (1273 aa).

Disordered stretches follow at residues 1 to 30, 346 to 387, 427 to 559, 960 to 999, and 1021 to 1273; these read MSVKEGAQRKWAALKEKLGPQDSDPTEANL, GRPR…GQQP, LSSS…PLPG, NKDRKEQMAKAERRKQQLAEEEARRPRDEDGKPIRKGPGK, and KTAR…CVIQ. Residue serine 2 is modified to N-acetylserine. In terms of domain architecture, GBD/FH3 spans 2–330; it reads SVKEGAQRKW…RAVLLASDAQ (329 aa). Phosphoserine is present on serine 351. Residues 359–382 show a composition bias toward low complexity; the sequence is SVQTNSVQNQGSSSQNTTTPTTKV. The FH1 domain occupies 421–564; it reads PLPTPPLSSS…PPLPGFSVPS (144 aa). 2 stretches are compositionally biased toward pro residues: residues 433 to 516 and 524 to 558; these read VLPP…PLPS and QPPPPPPPPLPGMCPVPPPPPLPRAGQIPPPPPLP. The region spanning 589 to 979 is the FH2 domain; that stretch reads HRRVNPPTLR…AERRKQQLAE (391 aa). Residues 907–984 adopt a coiled-coil conformation; it reads EASQELDKVF…QQLAEEEARR (78 aa). Residues 1007–1022 enclose the WH2 domain; it reads DALLADIRKGFQLRKT. Polar residues predominate over residues 1047 to 1059; that stretch reads ATASNPTQGTNHP. Positions 1088 to 1101 are enriched in basic and acidic residues; sequence SKEEDGPPALERRS. Serine 1172 and serine 1174 each carry phosphoserine. Over residues 1195 to 1204 the composition is skewed to acidic residues; that stretch reads GEDEDGEDTA. Phosphothreonine is present on threonine 1203. A phosphoserine mark is found at serine 1216 and serine 1218. 2 positions are modified to phosphothreonine: threonine 1223 and threonine 1230. Residues 1242-1251 are compositionally biased toward basic residues; it reads TSKRRKKRPS.

It belongs to the formin homology family. As to quaternary structure, interacts with profilin and actin at the FH1 and FH2 domains respectively. Interacts with DAAM2.

It is found in the cytoplasm. Its subcellular location is the perinuclear region. Its activity is regulated as follows. Phosphate inhibits both the depolymerization and severing activities. In terms of biological role, severs actin filaments and accelerates their polymerization and depolymerization. This is Inverted formin-2 (Inf2) from Mus musculus (Mouse).